Consider the following 418-residue polypeptide: 6-methylpretetramide 4-monooxygenase (418 aa).

FAD-binding positions include 15-44 (DVCV…LVER) and 289-299 (WARDGLLLIGD).

Belongs to the PheA/TfdB FAD monooxygenase family. FAD is required as a cofactor.

It carries out the reaction 6-methylpretetramide + NADPH + O2 + 2 H(+) = 4-hydroxy-6-methylpretetramide + NADP(+) + H2O. It participates in antibiotic biosynthesis; oxytetracycline biosynthesis. Functionally, involved in the biosynthesis of the tetracycline antibiotic, oxytetracycline. Catalyzes the C-4 hydroxylation of 6-methylpretetramide to yield the intermediate 4-hydroxyl-6-methylpretetramid, which is subsequently hydroxylated by OxyL to yield 4-keto-anhydrotetracycline. OxyE serves as the ancillary enzyme to assist OxyL in the hydroxylation of C-4. This is 6-methylpretetramide 4-monooxygenase from Streptomyces rimosus.